Consider the following 334-residue polypeptide: Fructose-1,6-bisphosphatase class 1 (334 aa).

4 residues coordinate Mg(2+): glutamate 93, aspartate 117, leucine 119, and aspartate 120. Residues 120–123 (DGSS), asparagine 213, tyrosine 244, and lysine 274 each bind substrate. Glutamate 280 contacts Mg(2+).

It belongs to the FBPase class 1 family. Homotetramer. Requires Mg(2+) as cofactor.

It localises to the cytoplasm. The catalysed reaction is beta-D-fructose 1,6-bisphosphate + H2O = beta-D-fructose 6-phosphate + phosphate. The protein operates within carbohydrate biosynthesis; gluconeogenesis. The protein is Fructose-1,6-bisphosphatase class 1 of Flavobacterium johnsoniae (strain ATCC 17061 / DSM 2064 / JCM 8514 / BCRC 14874 / CCUG 350202 / NBRC 14942 / NCIMB 11054 / UW101) (Cytophaga johnsonae).